The sequence spans 37 residues: Cytochrome b6-f complex subunit 5 (37 aa).

The helical transmembrane segment at 5–25 threads the bilayer; the sequence is LLSGIVLGLIPITLAGLFVTA.

This sequence belongs to the PetG family. As to quaternary structure, the 4 large subunits of the cytochrome b6-f complex are cytochrome b6, subunit IV (17 kDa polypeptide, PetD), cytochrome f and the Rieske protein, while the 4 small subunits are PetG, PetL, PetM and PetN. The complex functions as a dimer.

Its subcellular location is the plastid. The protein localises to the chloroplast thylakoid membrane. Component of the cytochrome b6-f complex, which mediates electron transfer between photosystem II (PSII) and photosystem I (PSI), cyclic electron flow around PSI, and state transitions. PetG is required for either the stability or assembly of the cytochrome b6-f complex. The sequence is that of Cytochrome b6-f complex subunit 5 from Zygnema circumcarinatum (Green alga).